Consider the following 381-residue polypeptide: Stearoyl-[acyl-carrier-protein] 9-desaturase 1, chloroplastic (381 aa).

The N-terminal 26 residues, 1-26 (MQVVGTVRVSGCGAVVAPSRRQCRVS), are a transit peptide targeting the chloroplast. 6 residues coordinate Fe cation: glutamate 120, glutamate 158, histidine 161, glutamate 211, glutamate 244, and histidine 247.

It belongs to the fatty acid desaturase type 2 family. In terms of assembly, homodimer. Requires Fe(2+) as cofactor.

Its subcellular location is the plastid. It is found in the chloroplast. It carries out the reaction octadecanoyl-[ACP] + 2 reduced [2Fe-2S]-[ferredoxin] + O2 + 2 H(+) = (9Z)-octadecenoyl-[ACP] + 2 oxidized [2Fe-2S]-[ferredoxin] + 2 H2O. It functions in the pathway lipid metabolism; fatty acid metabolism. Functionally, converts stearoyl-ACP to oleoyl-ACP by introduction of a cis double bond between carbons 9 and 10 of the acyl chain. This is Stearoyl-[acyl-carrier-protein] 9-desaturase 1, chloroplastic from Oryza sativa subsp. indica (Rice).